We begin with the raw amino-acid sequence, 449 residues long: Glucose-6-phosphate isomerase (449 aa).

E290 serves as the catalytic Proton donor. Residues H311 and K425 contribute to the active site.

Belongs to the GPI family.

It localises to the cytoplasm. It carries out the reaction alpha-D-glucose 6-phosphate = beta-D-fructose 6-phosphate. It participates in carbohydrate biosynthesis; gluconeogenesis. It functions in the pathway carbohydrate degradation; glycolysis; D-glyceraldehyde 3-phosphate and glycerone phosphate from D-glucose: step 2/4. In terms of biological role, catalyzes the reversible isomerization of glucose-6-phosphate to fructose-6-phosphate. The chain is Glucose-6-phosphate isomerase from Clostridium tetani (strain Massachusetts / E88).